The following is a 470-amino-acid chain: Neuraminidase (470 aa).

Residues 1–6 (MNPNQK) are Intravirion-facing. Residues 7–27 (IITIGSICMAIGIISLILQIG) traverse the membrane as a helical segment. Residues 11 to 33 (GSICMAIGIISLILQIGNIISIW) form an involved in apical transport and lipid raft association region. Residues 28-470 (NIISIWVSHS…GAELPFTIDK (443 aa)) lie on the Virion surface side of the membrane. Residues 36-90 (HSIQTGSQNHTGICNQRIITYENSTWVNQTYVNISNTNVVAGKDTTSMTLAGNSS) form a hypervariable stalk region region. N-linked (GlcNAc...) asparagine; by host glycans are attached at residues Asn44, Asn58, Asn63, Asn68, and Asn88. The segment at 91-470 (LCPIRGWAIY…GAELPFTIDK (380 aa)) is head of neuraminidase. 8 cysteine pairs are disulfide-bonded: Cys92–Cys417, Cys124–Cys129, Cys184–Cys231, Cys233–Cys238, Cys279–Cys292, Cys281–Cys290, Cys318–Cys335, and Cys421–Cys447. Arg118 is a binding site for substrate. Residue Asn146 is glycosylated (N-linked (GlcNAc...) asparagine; by host). Asp151 (proton donor/acceptor) is an active-site residue. A substrate-binding site is contributed by Arg152. A glycan (N-linked (GlcNAc...) asparagine; by host) is linked at Asn235. A substrate-binding site is contributed by 277–278 (EE). The N-linked (GlcNAc...) asparagine; by host glycan is linked to Asn285. Arg293 lines the substrate pocket. Positions 294, 298, and 324 each coordinate Ca(2+). Asn365 is a glycosylation site (N-linked (GlcNAc...) asparagine; by host). Arg368 lines the substrate pocket. The Nucleophile role is filled by Tyr402. Residue Asn455 is glycosylated (N-linked (GlcNAc...) asparagine; by host).

The protein belongs to the glycosyl hydrolase 34 family. In terms of assembly, homotetramer. It depends on Ca(2+) as a cofactor. Post-translationally, N-glycosylated.

The protein localises to the virion membrane. It localises to the host apical cell membrane. The enzyme catalyses Hydrolysis of alpha-(2-&gt;3)-, alpha-(2-&gt;6)-, alpha-(2-&gt;8)- glycosidic linkages of terminal sialic acid residues in oligosaccharides, glycoproteins, glycolipids, colominic acid and synthetic substrates.. Its activity is regulated as follows. Inhibited by the neuraminidase inhibitors zanamivir (Relenza) and oseltamivir (Tamiflu). These drugs interfere with the release of progeny virus from infected cells and are effective against all influenza strains. Resistance to neuraminidase inhibitors is quite rare. Its function is as follows. Catalyzes the removal of terminal sialic acid residues from viral and cellular glycoconjugates. Cleaves off the terminal sialic acids on the glycosylated HA during virus budding to facilitate virus release. Additionally helps virus spread through the circulation by further removing sialic acids from the cell surface. These cleavages prevent self-aggregation and ensure the efficient spread of the progeny virus from cell to cell. Otherwise, infection would be limited to one round of replication. Described as a receptor-destroying enzyme because it cleaves a terminal sialic acid from the cellular receptors. May facilitate viral invasion of the upper airways by cleaving the sialic acid moieties on the mucin of the airway epithelial cells. Likely to plays a role in the budding process through its association with lipid rafts during intracellular transport. May additionally display a raft-association independent effect on budding. Plays a role in the determination of host range restriction on replication and virulence. Sialidase activity in late endosome/lysosome traffic seems to enhance virus replication. The sequence is that of Neuraminidase from Influenza A virus (strain A/Kiev/59/1979 H1N1).